We begin with the raw amino-acid sequence, 463 residues long: UDP-N-acetylmuramate--L-alanine ligase (463 aa).

Residue 112–118 (GTHGKTT) coordinates ATP.

Belongs to the MurCDEF family.

It is found in the cytoplasm. The catalysed reaction is UDP-N-acetyl-alpha-D-muramate + L-alanine + ATP = UDP-N-acetyl-alpha-D-muramoyl-L-alanine + ADP + phosphate + H(+). It functions in the pathway cell wall biogenesis; peptidoglycan biosynthesis. Its function is as follows. Cell wall formation. The chain is UDP-N-acetylmuramate--L-alanine ligase from Thiobacillus denitrificans (strain ATCC 25259 / T1).